Reading from the N-terminus, the 158-residue chain is MDLASEITSATQTSSLCSSGRGHAGYPAPGIVAHGFETHGTARVAQGHLLPPCLLPPPQMPVLAALRDLSRRGSTSSSRSPSRPVSTSASKPCLPASCLGETWSISINLVGSSGHLQSPGAQRDAQRETGCLGPSWLPHHQGRDEELSLSHSAQGEEF.

Residues methionine 1–serine 18 show a composition bias toward polar residues. Disordered stretches follow at residues methionine 1 to glycine 20, leucine 66 to leucine 94, and glycine 111 to phenylalanine 158. Low complexity predominate over residues arginine 72–serine 90. 2 stretches are compositionally biased toward polar residues: residues glycine 111 to glycine 120 and leucine 149 to phenylalanine 158.

This is an uncharacterized protein from Homo sapiens (Human).